Here is a 355-residue protein sequence, read N- to C-terminus: C-C chemokine receptor type 8 (355 aa).

The Extracellular portion of the chain corresponds to 1–35 (MDYTLDLSVTTVTDYYYPDIFSSPCDAELIQTNGK). Residues 36 to 63 (LLLAVFYCLLFVFSLLGNSLVILVLVVC) traverse the membrane as a helical segment. The Cytoplasmic segment spans residues 64–73 (KKLRSITDVY). Residues 74–93 (LLNLALSDLLFVFSFPFQTY) traverse the membrane as a helical segment. The Extracellular segment spans residues 94–107 (YLLDQWVFGTVMCK). Residues Cys106 and Cys183 are joined by a disulfide bond. Residues 108 to 129 (VVSGFYYIGFYSSMFFITLMSV) form a helical membrane-spanning segment. Topologically, residues 130 to 146 (DRYLAVVHAVYALKVRT) are cytoplasmic. A helical transmembrane segment spans residues 147 to 171 (IRMGTTLCLAVWLTAIMATIPLLVF). Residues 172 to 202 (YQVASEDGVLQCYSFYNQQTLKWKIFTNFKM) are Extracellular-facing. Residues 203-222 (NILGLLIPFTIFMFCYIKIL) form a helical membrane-spanning segment. Topologically, residues 223 to 238 (HQLKRCQNHNKTKAIR) are cytoplasmic. The helical transmembrane segment at 239-263 (LVLIVVIASLLFWVPFNVVLFLTSL) threads the bilayer. Residues 264–280 (HSMHILDGCSISQQLTY) lie on the Extracellular side of the membrane. A helical transmembrane segment spans residues 281–304 (ATHVTEIISFTHCCVNPVIYAFVG). Topologically, residues 305-355 (EKFKKHLSEIFQKSCSQIFNYLGRQMPRESCEKSSSCQQHSSRSSSVDYIL) are cytoplasmic.

Belongs to the G-protein coupled receptor 1 family.

Its subcellular location is the cell membrane. In terms of biological role, receptor for the chemokine CCL1/SCYA1/I-309. May regulate monocyte chemotaxis and thymic cell line apoptosis. Alternative coreceptor with CD4 for HIV-1 infection. In Homo sapiens (Human), this protein is C-C chemokine receptor type 8 (CCR8).